The chain runs to 208 residues: Small ribosomal subunit protein uS4 (208 aa).

An S4 RNA-binding domain is found at 97-160 (TRLDNVCYRM…QKQLRVQEAL (64 aa)).

This sequence belongs to the universal ribosomal protein uS4 family. Part of the 30S ribosomal subunit. Contacts protein S5. The interaction surface between S4 and S5 is involved in control of translational fidelity.

Functionally, one of the primary rRNA binding proteins, it binds directly to 16S rRNA where it nucleates assembly of the body of the 30S subunit. Its function is as follows. With S5 and S12 plays an important role in translational accuracy. This is Small ribosomal subunit protein uS4 from Xanthomonas oryzae pv. oryzae (strain MAFF 311018).